The primary structure comprises 218 residues: Peptide methionine sulfoxide reductase MsrA (218 aa).

The segment at 1 to 28 (MSFLDSYRKKTQMPSTDEALPGRAQPIP) is disordered. Cys57 is a catalytic residue.

The protein belongs to the MsrA Met sulfoxide reductase family.

It catalyses the reaction L-methionyl-[protein] + [thioredoxin]-disulfide + H2O = L-methionyl-(S)-S-oxide-[protein] + [thioredoxin]-dithiol. The catalysed reaction is [thioredoxin]-disulfide + L-methionine + H2O = L-methionine (S)-S-oxide + [thioredoxin]-dithiol. In terms of biological role, has an important function as a repair enzyme for proteins that have been inactivated by oxidation. Catalyzes the reversible oxidation-reduction of methionine sulfoxide in proteins to methionine. The chain is Peptide methionine sulfoxide reductase MsrA from Brucella anthropi (strain ATCC 49188 / DSM 6882 / CCUG 24695 / JCM 21032 / LMG 3331 / NBRC 15819 / NCTC 12168 / Alc 37) (Ochrobactrum anthropi).